The following is a 96-amino-acid chain: UPF0235 protein VV2877 (96 aa).

The protein belongs to the UPF0235 family.

The polypeptide is UPF0235 protein VV2877 (Vibrio vulnificus (strain YJ016)).